The primary structure comprises 464 residues: DNA primase DnaG (464 aa).

The Toprim domain maps to 200–274; sequence DSIIVVEGRA…DVDYVARAPE (75 aa). Mg(2+) contacts are provided by Glu-206, Asp-248, and Asp-250. Over residues 322–332 the composition is skewed to basic and acidic residues; sequence NGREEKVREVK. Residues 322 to 359 form a disordered region; sequence NGREEKVREVKPPAPAPAPAPAPKPIEKPEPKEREEKI. Over residues 333 to 345 the composition is skewed to pro residues; the sequence is PPAPAPAPAPAPK. Residues 346-359 show a composition bias toward basic and acidic residues; sequence PIEKPEPKEREEKI.

It belongs to the archaeal DnaG primase family. As to quaternary structure, forms a ternary complex with MCM helicase and DNA. Component of the archaeal exosome complex. It depends on Mg(2+) as a cofactor.

The catalysed reaction is ssDNA + n NTP = ssDNA/pppN(pN)n-1 hybrid + (n-1) diphosphate.. RNA polymerase that catalyzes the synthesis of short RNA molecules used as primers for DNA polymerase during DNA replication. Also part of the exosome, which is a complex involved in RNA degradation. Acts as a poly(A)-binding protein that enhances the interaction between heteromeric, adenine-rich transcripts and the exosome. This Thermococcus onnurineus (strain NA1) protein is DNA primase DnaG.